Here is a 244-residue protein sequence, read N- to C-terminus: Signal recognition particle receptor subunit beta (244 aa).

Residues 7 to 23 (IIACLLVIGTTIALIAV) traverse the membrane as a helical segment. GTP is bound by residues 45–53 (GPQNSGKTS), 66–69 (TVVS), Gly-90, and 154–157 (NKSE).

Belongs to the SRP receptor beta subunit family. Heterodimer of an alpha and a beta chain.

The protein localises to the endoplasmic reticulum membrane. Functionally, component of the signal recognition particle (SRP) complex receptor (SR). Ensures, in conjunction with the SRP complex, the correct targeting of the nascent secretory proteins to the endoplasmic reticulum membrane system. May mediate the membrane association of SR. The protein is Signal recognition particle receptor subunit beta (SRP102) of Saccharomyces cerevisiae (strain ATCC 204508 / S288c) (Baker's yeast).